A 182-amino-acid polypeptide reads, in one-letter code: Lipid A acyltransferase PagP (182 aa).

The first 21 residues, 1 to 21, serve as a signal peptide directing secretion; the sequence is MTQYFRALAFFLLLVPATAMA. Residue cysteine 22 is the site of N-palmitoyl cysteine attachment. A lipid anchor (S-diacylglycerol cysteine) is attached at cysteine 22. Catalysis depends on residues histidine 55, aspartate 98, and serine 99.

The protein belongs to the lipid A palmitoyltransferase family. In terms of assembly, homodimer.

It localises to the cell outer membrane. It catalyses the reaction a lipid A + a 1,2-diacyl-sn-glycero-3-phosphocholine = a hepta-acyl lipid A + a 2-acyl-sn-glycero-3-phosphocholine. The enzyme catalyses a lipid IVA + a 1,2-diacyl-sn-glycero-3-phosphocholine = a lipid IVB + a 2-acyl-sn-glycero-3-phosphocholine. It carries out the reaction a lipid IIA + a 1,2-diacyl-sn-glycero-3-phosphocholine = a lipid IIB + a 2-acyl-sn-glycero-3-phosphocholine. Transfers a fatty acid residue from the sn-1 position of a phospholipid to the N-linked hydroxyfatty acid chain on the proximal unit of lipid A or its precursors. Required for resistance to cationic antimicrobial peptides (CAMPs). Modifications of lipid A with an acyl chain to evade host immune defenses by resisting antibody-mediated complement lysis during respiratory infection. This chain is Lipid A acyltransferase PagP, found in Bordetella bronchiseptica (strain ATCC BAA-588 / NCTC 13252 / RB50) (Alcaligenes bronchisepticus).